We begin with the raw amino-acid sequence, 889 residues long: DNA-directed RNA polymerase subunit Rpo1N (889 aa).

Residues Cys62, Cys65, Cys72, His75, Cys102, Cys105, Cys149, and Cys152 each coordinate Zn(2+). Asp466, Asp468, and Asp470 together coordinate Mg(2+).

This sequence belongs to the RNA polymerase beta' chain family. In terms of assembly, part of the RNA polymerase complex. Requires Mg(2+) as cofactor. The cofactor is Zn(2+).

The protein localises to the cytoplasm. It carries out the reaction RNA(n) + a ribonucleoside 5'-triphosphate = RNA(n+1) + diphosphate. In terms of biological role, DNA-dependent RNA polymerase (RNAP) catalyzes the transcription of DNA into RNA using the four ribonucleoside triphosphates as substrates. Forms the clamp head domain. This Methanococcus vannielii (strain ATCC 35089 / DSM 1224 / JCM 13029 / OCM 148 / SB) protein is DNA-directed RNA polymerase subunit Rpo1N.